The chain runs to 183 residues: Threonylcarbamoyl-AMP synthase (183 aa).

Positions Met-1 to Gly-183 constitute a YrdC-like domain.

Belongs to the SUA5 family. TsaC subfamily.

The protein localises to the cytoplasm. It carries out the reaction L-threonine + hydrogencarbonate + ATP = L-threonylcarbamoyladenylate + diphosphate + H2O. Required for the formation of a threonylcarbamoyl group on adenosine at position 37 (t(6)A37) in tRNAs that read codons beginning with adenine. Catalyzes the conversion of L-threonine, HCO(3)(-)/CO(2) and ATP to give threonylcarbamoyl-AMP (TC-AMP) as the acyladenylate intermediate, with the release of diphosphate. The protein is Threonylcarbamoyl-AMP synthase of Histophilus somni (strain 2336) (Haemophilus somnus).